The primary structure comprises 260 residues: Sperm microtubule inner protein 6 (260 aa).

Belongs to the SPMIP6 family. As to quaternary structure, microtubule inner protein component of sperm flagellar doublet microtubules. Interacts with alpha-tubulin. In terms of tissue distribution, testis-specific, expressed exclusively in germ cells (at protein level). As to expression, testis-specific. Expressed in both lung and testis.

Its subcellular location is the cytoplasm. It is found in the cytoskeleton. It localises to the nucleus. The protein resides in the mitochondrion. The protein localises to the flagellum axoneme. Functionally, may participate in intramanchette transport and midpiece formation of the sperm tail. May play a potential role in somatic cell proliferation. This Mus musculus (Mouse) protein is Sperm microtubule inner protein 6 (SPMIP6).